Here is a 164-residue protein sequence, read N- to C-terminus: MIDIGLSKMALIGAVALIVIGPEKLPRVARTVGTLLGKAQRYVADVKAEVNRSMELDELRKMKDTVETAARDVHHSFQTHASEFQKDWESGTSDAAATGHDGILDPAALEGPSSRIVPTYKHPGKNWRLKRSATPQWYKARAGVRTKAQSGAARVARFRPRKFQ.

Residues 1–21 (MIDIGLSKMALIGAVALIVIG) form a helical membrane-spanning segment. The segment at 81–102 (ASEFQKDWESGTSDAAATGHDG) is disordered.

It belongs to the TatB family. The Tat system comprises two distinct complexes: a TatABC complex, containing multiple copies of TatA, TatB and TatC subunits, and a separate TatA complex, containing only TatA subunits. Substrates initially bind to the TatABC complex, which probably triggers association of the separate TatA complex to form the active translocon.

Its subcellular location is the cell inner membrane. In terms of biological role, part of the twin-arginine translocation (Tat) system that transports large folded proteins containing a characteristic twin-arginine motif in their signal peptide across membranes. Together with TatC, TatB is part of a receptor directly interacting with Tat signal peptides. TatB may form an oligomeric binding site that transiently accommodates folded Tat precursor proteins before their translocation. The protein is Sec-independent protein translocase protein TatB of Paracidovorax citrulli (strain AAC00-1) (Acidovorax citrulli).